The chain runs to 260 residues: ARL14 effector protein (260 aa).

Methionine 1 is subject to N-acetylmethionine. Lysine 177 participates in a covalent cross-link: Glycyl lysine isopeptide (Lys-Gly) (interchain with G-Cter in SUMO2). Serine 183 is modified (phosphoserine).

Interacts with ARL14 and MYO1E.

Its subcellular location is the cytoplasm. Its function is as follows. Through its interaction with ARL14 and MYO1E, may connect MHC class II-containing cytoplasmic vesicles to the actin network and hence controls the movement of these vesicles along the actin cytoskeleton in dendritic cells. The sequence is that of ARL14 effector protein (ARL14EP) from Bos taurus (Bovine).